A 309-amino-acid chain; its full sequence is Ribosomal RNA large subunit methyltransferase F (309 aa).

Residues 1–21 (MASQHDKKSVQSGLLHPRNPH) form a disordered region.

This sequence belongs to the methyltransferase superfamily. METTL16/RlmF family.

The protein localises to the cytoplasm. It catalyses the reaction adenosine(1618) in 23S rRNA + S-adenosyl-L-methionine = N(6)-methyladenosine(1618) in 23S rRNA + S-adenosyl-L-homocysteine + H(+). In terms of biological role, specifically methylates the adenine in position 1618 of 23S rRNA. In Desulfotalea psychrophila (strain LSv54 / DSM 12343), this protein is Ribosomal RNA large subunit methyltransferase F.